The primary structure comprises 208 residues: Putative archaetidylserine decarboxylase proenzyme (208 aa).

Residue serine 172 is the Schiff-base intermediate with substrate; via pyruvic acid of the active site. The residue at position 172 (serine 172) is a Pyruvic acid (Ser); by autocatalysis.

This sequence belongs to the phosphatidylserine decarboxylase family. PSD-A subfamily. As to quaternary structure, heterodimer of a large membrane-associated beta subunit and a small pyruvoyl-containing alpha subunit. It depends on pyruvate as a cofactor. Post-translationally, is synthesized initially as an inactive proenzyme. Formation of the active enzyme involves a self-maturation process in which the active site pyruvoyl group is generated from an internal serine residue via an autocatalytic post-translational modification. Two non-identical subunits are generated from the proenzyme in this reaction, and the pyruvate is formed at the N-terminus of the alpha chain, which is derived from the carboxyl end of the proenzyme. The post-translation cleavage follows an unusual pathway, termed non-hydrolytic serinolysis, in which the side chain hydroxyl group of the serine supplies its oxygen atom to form the C-terminus of the beta chain, while the remainder of the serine residue undergoes an oxidative deamination to produce ammonia and the pyruvoyl prosthetic group on the alpha chain.

The protein resides in the cell membrane. It carries out the reaction archaetidylserine + H(+) = archaetidylethanolamine + CO2. Its function is as follows. Catalyzes the formation of archaetidylethanolamine (PtdEtn) from archaetidylserine (PtdSer). The polypeptide is Putative archaetidylserine decarboxylase proenzyme (Methanosarcina mazei (strain ATCC BAA-159 / DSM 3647 / Goe1 / Go1 / JCM 11833 / OCM 88) (Methanosarcina frisia)).